Consider the following 184-residue polypeptide: Orotate phosphoribosyltransferase (184 aa).

5-phospho-alpha-D-ribose 1-diphosphate contacts are provided by residues R99, K100, K103, H105, and 125–133 (EDTTTTGNS). Residues T129 and R157 each coordinate orotate.

It belongs to the purine/pyrimidine phosphoribosyltransferase family. PyrE subfamily. As to quaternary structure, homodimer. Requires Mg(2+) as cofactor.

It catalyses the reaction orotidine 5'-phosphate + diphosphate = orotate + 5-phospho-alpha-D-ribose 1-diphosphate. Its pathway is pyrimidine metabolism; UMP biosynthesis via de novo pathway; UMP from orotate: step 1/2. Functionally, catalyzes the transfer of a ribosyl phosphate group from 5-phosphoribose 1-diphosphate to orotate, leading to the formation of orotidine monophosphate (OMP). This is Orotate phosphoribosyltransferase from Corynebacterium glutamicum (strain R).